The primary structure comprises 573 residues: Putative 15-O-acetyltransferase SAT12 (573 aa).

Positions 1 to 40 are disordered; the sequence is MLDDDCSPTSSSEMSNASSREASITSRSSSTSGNNSLPED. The segment covering 7–36 has biased composition (low complexity); sequence SPTSSSEMSNASSREASITSRSSSTSGNNS.

Belongs to the trichothecene O-acetyltransferase family.

The protein operates within mycotoxin biosynthesis. Functionally, putative 15-O-acetyltransferase; part of the satratoxin SC2 cluster involved in the biosynthesis of satratoxins, trichothecene mycotoxins that are associated with human food poisonings. Satratoxins are suggested to be made by products of multiple gene clusters (SC1, SC2 and SC3) that encode 21 proteins in all, including polyketide synthases, acetyltransferases, and other enzymes expected to modify the trichothecene skeleton. SC1 encodes 10 proteins, SAT1 to SAT10. The largest are SAT8, which encodes a putative polyketide synthase (PKS) with a conventional non-reducing architecture, and SAT10, a putative protein containing four ankyrin repeats and thus may be involved in protein scaffolding. The putative short-chain reductase SAT3 may assist the PKS in some capacity. SAT6 contains a secretory lipase domain and acts probably as a trichothecene esterase. SAT5 encodes a putative acetyltransferase, and so, with SAT6, may affect endogenous protection from toxicity. The probable transcription factor SAT9 may regulate the expression of the SC1 cluster. SC2 encodes proteins SAT11 to SAT16, the largest of which encodes the putative reducing PKS SAT13. SAT11 is a cytochrome P450 monooxygenase, while SAT14 and SAT16 are probable acetyltransferases. The SC2 cluster may be regulated by the transcription factor SAT15. SC3 is a small cluster that encodes 5 proteins, SAT17 to SAT21. SAT21 is a putative MFS-type transporter which may have a role in exporting secondary metabolites. The four other proteins putatively encoded in SC3 include the taurine hydroxylase-like protein SAT17, the O-methyltransferase SAT18, the acetyltransferase SAT19, and the Cys6-type zinc finger SAT20, the latter being probably involved in regulation of SC3 expression. The polypeptide is Putative 15-O-acetyltransferase SAT12 (Stachybotrys chartarum (strain CBS 109288 / IBT 7711) (Toxic black mold)).